A 155-amino-acid chain; its full sequence is Cytochrome c-type biogenesis protein CcmE (155 aa).

At 1–8 the chain is on the cytoplasmic side; that stretch reads MNPRRKKR. Residues 9–29 form a helical; Signal-anchor for type II membrane protein membrane-spanning segment; sequence LLITSLLAVALSLAVGLVLFA. Over 30 to 155 the chain is Periplasmic; sequence LQQNIDLFYT…GMDNFKANNK (126 aa). Positions 131 and 135 each coordinate heme.

It belongs to the CcmE/CycJ family.

Its subcellular location is the cell inner membrane. Its function is as follows. Heme chaperone required for the biogenesis of c-type cytochromes. Transiently binds heme delivered by CcmC and transfers the heme to apo-cytochromes in a process facilitated by CcmF and CcmH. This is Cytochrome c-type biogenesis protein CcmE from Psychromonas ingrahamii (strain DSM 17664 / CCUG 51855 / 37).